Here is a 278-residue protein sequence, read N- to C-terminus: 4-deoxy-L-threo-5-hexosulose-uronate ketol-isomerase (278 aa).

Residues histidine 196, histidine 198, glutamate 203, and histidine 245 each contribute to the Zn(2+) site.

It belongs to the KduI family. As to quaternary structure, homohexamer. Zn(2+) is required as a cofactor.

It catalyses the reaction 5-dehydro-4-deoxy-D-glucuronate = 3-deoxy-D-glycero-2,5-hexodiulosonate. It participates in glycan metabolism; pectin degradation; 2-dehydro-3-deoxy-D-gluconate from pectin: step 4/5. Its function is as follows. Catalyzes the isomerization of 5-dehydro-4-deoxy-D-glucuronate to 3-deoxy-D-glycero-2,5-hexodiulosonate. This is 4-deoxy-L-threo-5-hexosulose-uronate ketol-isomerase from Escherichia coli O8 (strain IAI1).